We begin with the raw amino-acid sequence, 492 residues long: Cytochrome P450 2L1 (492 aa).

Cys-436 provides a ligand contact to heme.

This sequence belongs to the cytochrome P450 family. It depends on heme as a cofactor.

Its subcellular location is the endoplasmic reticulum membrane. The protein localises to the microsome membrane. It carries out the reaction an organic molecule + reduced [NADPH--hemoprotein reductase] + O2 = an alcohol + oxidized [NADPH--hemoprotein reductase] + H2O + H(+). Functionally, efficient in catalyzing the monooxygenation of benzphetamine, aminopyrine, benzo(a)pyrene, progesterone, and testosterone. The sequence is that of Cytochrome P450 2L1 (CYP2L1) from Panulirus argus (Caribbean spiny lobster).